We begin with the raw amino-acid sequence, 894 residues long: Alpha-actinin-2 (894 aa).

Positions 1 to 254 (MNQIEPGVQY…IMTYVSCFYH (254 aa)) are actin-binding. Calponin-homology (CH) domains lie at 38–142 (KQQR…LRFA) and 151–257 (TSAK…HAFA). A Phosphothreonine modification is found at Thr-237. Spectrin repeat units follow at residues 281–391 (RLME…WLLN), 401–506 (HLAE…ALER), 516–627 (QLHL…SLQE), and 637–740 (RLRR…EVET). EF-hand domains lie at 753 to 788 (EQMN…MGYD) and 789 to 824 (LGEA…ETAD). Ca(2+) is bound by residues Asp-766, Asn-770, Asp-777, Asp-802, Asn-804, and Thr-808.

It belongs to the alpha-actinin family. In terms of assembly, homodimer; antiparallel. Also forms heterodimers with ACTN3. Interacts with ADAM12, MYOZ1, MYOZ2 and MYOZ3. Interacts via its C-terminal region with the LDB3 PDZ domain. Interacts with XIRP2. Interacts with DST (via N-terminus). Interacts with PARVB. Interacts with SYNPO2. In terms of processing, ubiquitinated by FBXL22, leading to proteasomal degradation.

It is found in the cytoplasm. The protein localises to the myofibril. It localises to the sarcomere. Its subcellular location is the z line. In terms of biological role, F-actin cross-linking protein which is thought to anchor actin to a variety of intracellular structures. This is a bundling protein. This is Alpha-actinin-2 (ACTN2) from Bos taurus (Bovine).